A 189-amino-acid polypeptide reads, in one-letter code: Xanthine phosphoribosyltransferase (189 aa).

Residues L20 and N27 each contribute to the xanthine site. 128–132 (ANGKA) is a 5-phospho-alpha-D-ribose 1-diphosphate binding site. K156 is a xanthine binding site.

The protein belongs to the purine/pyrimidine phosphoribosyltransferase family. Xpt subfamily. In terms of assembly, homodimer.

It localises to the cytoplasm. The enzyme catalyses XMP + diphosphate = xanthine + 5-phospho-alpha-D-ribose 1-diphosphate. It participates in purine metabolism; XMP biosynthesis via salvage pathway; XMP from xanthine: step 1/1. Converts the preformed base xanthine, a product of nucleic acid breakdown, to xanthosine 5'-monophosphate (XMP), so it can be reused for RNA or DNA synthesis. The sequence is that of Xanthine phosphoribosyltransferase from Pseudomonas syringae pv. syringae (strain B728a).